We begin with the raw amino-acid sequence, 288 residues long: Long chain fatty acid elongase 1 (288 aa).

Transmembrane regions (helical) follow at residues Phe39–Phe59, Leu73–Val93, Trp126–Leu146, Pro150–His170, Gly180–Leu197, Ile217–Thr237, and Val247–Leu267.

It belongs to the ELO family.

It localises to the membrane. It catalyses the reaction (6Z,9Z,12Z)-octadecatrienoyl-CoA + malonyl-CoA + H(+) = (8Z,11Z,14Z)-3-oxoeicosatrienoyl-CoA + CO2 + CoA. It carries out the reaction (6Z,9Z,12Z,15Z)-octadecatetraenoyl-CoA + malonyl-CoA + H(+) = (8Z,11Z,14Z,17Z)-3-oxoicosatetraenoyl-CoA + CO2 + CoA. The enzyme catalyses (9Z)-hexadecenoyl-CoA + malonyl-CoA + H(+) = 3-oxo-(11Z)-octadecenoyl-CoA + CO2 + CoA. Its pathway is lipid metabolism; fatty acid biosynthesis. Catalyzes the first and rate-limiting reaction of the four reactions that constitute the long-chain fatty acids elongation cycle. Uses malonyl-CoA to add 2 carbons per cycle to the chain of long-chain fatty acids. Condensing enzyme that catalyzes the elongation of monounsaturated (MUFA) and polyunsaturated (PUFA) fatty acids that are involved in multiple biological processes as precursors of membrane lipids and lipid mediators. The sequence is that of Long chain fatty acid elongase 1 from Caenorhabditis elegans.